A 61-amino-acid polypeptide reads, in one-letter code: Japonicin-1CDYa (61 aa).

A signal peptide spans 1-22 (MFTLKKSLLLLFFLGVINVSLC). Residues 23–45 (EEERDADEEERRDDPEERDVEVE) constitute a propeptide that is removed on maturation. An intrachain disulfide couples Cys55 to Cys61.

This sequence belongs to the frog skin active peptide (FSAP) family. Brevinin subfamily. As to expression, expressed by the skin glands.

Its subcellular location is the secreted. Its function is as follows. Antimicrobial peptide. Has low activity against the Gram-positive bacterium S.aureus (MIC&gt;100 uM) and the Gram-negative bacterium E.coli (MIC=25 uM). Lacks hemolytic activity against human erythrocytes. The protein is Japonicin-1CDYa of Rana dybowskii (Dybovsky's frog).